The following is a 488-amino-acid chain: Stromelysin-3 (488 aa).

Positions 1-31 (MAPAAWLRSAAARALLPPMLLLLLQPPPLLA) are cleaved as a signal peptide. Residues 32 to 97 (RALPPDAHHL…GLSARNRQKR (66 aa)) constitute a propeptide, activation peptide. The segment at 41 to 93 (LHAERRGPQPWHAALPSSPAPAPATQEAPRPASSLRPPRCGVPDPSDGLSARN) is disordered. The segment covering 50–79 (PWHAALPSSPAPAPATQEAPRPASSLRPPR) has biased composition (low complexity). The Cysteine switch motif lies at 78–85 (PRCGVPDP). Zn(2+) contacts are provided by C80 and D166. D171, G172, G174, and I176 together coordinate Ca(2+). The Zn(2+) site is built by H179, H192, and H215. The active site involves E216. Positions 219 and 225 each coordinate Zn(2+). 4 Hemopexin repeats span residues 291–339 (PDAC…WQGL), 340–382 (PSPV…ELGL), 384–432 (RFPV…WRGV), and 433–480 (PSEI…FFGC). C294 and C480 are disulfide-bonded.

The protein belongs to the peptidase M10A family. Ca(2+) serves as cofactor. Requires Zn(2+) as cofactor. Post-translationally, the precursor is cleaved by a furin endopeptidase. In terms of tissue distribution, specifically expressed in stromal cells of breast carcinomas.

It localises to the secreted. Its subcellular location is the extracellular space. The protein resides in the extracellular matrix. In terms of biological role, may play an important role in the progression of epithelial malignancies. This chain is Stromelysin-3 (MMP11), found in Homo sapiens (Human).